The chain runs to 440 residues: Probable exopolygalacturonase C (440 aa).

Residues 1–19 (MSVFKASFLFLLSSSLVHG) form the signal peptide. Asn82 and Asn99 each carry an N-linked (GlcNAc...) asparagine glycan. PbH1 repeat units lie at residues 215-236 (GTNI…AVGA), 238-259 (SHDT…SIGS), and 265-288 (TDFA…YAAR). Asp229 serves as the catalytic Proton donor. His253 is a catalytic residue. 4 N-linked (GlcNAc...) asparagine glycosylation sites follow: Asn269, Asn301, Asn311, and Asn334. A disulfide bridge connects residues Cys387 and Cys393. Residues Asn417 and Asn432 are each glycosylated (N-linked (GlcNAc...) asparagine).

Belongs to the glycosyl hydrolase 28 family.

The protein localises to the secreted. It carries out the reaction [(1-&gt;4)-alpha-D-galacturonosyl](n) + H2O = alpha-D-galacturonate + [(1-&gt;4)-alpha-D-galacturonosyl](n-1). Specific in hydrolyzing the terminal glycosidic bond of polygalacturonic acid and oligogalacturonates. The chain is Probable exopolygalacturonase C (pgxC) from Aspergillus niger (strain ATCC MYA-4892 / CBS 513.88 / FGSC A1513).